The chain runs to 653 residues: Epithelial sodium channel subunit gamma (653 aa).

Over 1-54 (MGHGRRISESIKKQLPVTGPEAPTVKNLMDWYLNNTNTHGCRRIAVSRGYLRRW) the chain is Cytoplasmic. Residues 55–75 (IWICFTVSSVGMIFWQWTLLL) traverse the membrane as a helical segment. Residues 76 to 546 (MSYYTVSVSV…GGQLGLWMSC (471 aa)) lie on the Extracellular side of the membrane. 8 disulfide bridges follow: Cys-100–Cys-290, Cys-214–Cys-221, Cys-267–Cys-274, Cys-379–Cys-464, Cys-401–Cys-460, Cys-405–Cys-456, Cys-414–Cys-441, and Cys-416–Cys-430. A helical transmembrane segment spans residues 547-567 (SIVCFLEMWEVFLVDILTIIA). Topologically, residues 568–653 (RYWLHRGRQW…DEQVSDTEVN (86 aa)) are cytoplasmic. A disordered region spans residues 582 to 608 (KERQMQQPSPPDHDTGHHNPVCIDDED).

This sequence belongs to the amiloride-sensitive sodium channel (TC 1.A.6) family. SCNN1G subfamily. As to quaternary structure, component of the heterotrimeric epithelial sodium channel (ENaC) composed of an alpha/SCNN1A, a beta/SCNN1B and a gamma/SCNN1G subunit. Strongly expressed in gill, liver, kidney and rectum and more weakly in heart, muscle and intestine.

It localises to the apical cell membrane. It catalyses the reaction Na(+)(in) = Na(+)(out). With respect to regulation, originally identified and characterized by its inhibition by the diuretic drug amiloride. Its function is as follows. This is one of the three pore-forming subunits of the heterotrimeric epithelial sodium channel (ENaC), a critical regulator of sodium balance and fluid homeostasis. ENaC operates in epithelial tissues, where it mediates the electrodiffusion of sodium ions from extracellular fluid through the apical membrane of cells, with water following osmotically. In Neoceratodus forsteri (Australian lungfish), this protein is Epithelial sodium channel subunit gamma.